A 127-amino-acid polypeptide reads, in one-letter code: Fluoride-specific ion channel FluC (127 aa).

4 consecutive transmembrane segments (helical) span residues 4-24 (IIYI…TQIA), 34-54 (FPFP…IGFF), 65-85 (FELR…FSTL), and 97-117 (FYGI…LAVL). Residues glycine 77 and threonine 80 each coordinate Na(+).

The protein belongs to the fluoride channel Fluc/FEX (TC 1.A.43) family.

The protein localises to the cell inner membrane. The enzyme catalyses fluoride(in) = fluoride(out). Na(+) is not transported, but it plays an essential structural role and its presence is essential for fluoride channel function. Fluoride-specific ion channel. Important for reducing fluoride concentration in the cell, thus reducing its toxicity. The chain is Fluoride-specific ion channel FluC from Bacteroides fragilis (strain ATCC 25285 / DSM 2151 / CCUG 4856 / JCM 11019 / LMG 10263 / NCTC 9343 / Onslow / VPI 2553 / EN-2).